Reading from the N-terminus, the 482-residue chain is tRNA sulfurtransferase (482 aa).

The 105-residue stretch at 61–165 (LTIRDALTRI…DDRLLLIKGR (105 aa)) folds into the THUMP domain. Residues 183 to 184 (LI), lysine 265, glycine 287, and glutamine 296 contribute to the ATP site. A disulfide bond links cysteine 344 and cysteine 456. Residues 404 to 482 (FGPNDVILDI…GFKNVKVYRP (79 aa)) form the Rhodanese domain. Catalysis depends on cysteine 456, which acts as the Cysteine persulfide intermediate.

Belongs to the ThiI family. As to quaternary structure, interacts with IscS.

The protein resides in the cytoplasm. The catalysed reaction is [ThiI sulfur-carrier protein]-S-sulfanyl-L-cysteine + a uridine in tRNA + 2 reduced [2Fe-2S]-[ferredoxin] + ATP + H(+) = [ThiI sulfur-carrier protein]-L-cysteine + a 4-thiouridine in tRNA + 2 oxidized [2Fe-2S]-[ferredoxin] + AMP + diphosphate. It carries out the reaction [ThiS sulfur-carrier protein]-C-terminal Gly-Gly-AMP + S-sulfanyl-L-cysteinyl-[cysteine desulfurase] + AH2 = [ThiS sulfur-carrier protein]-C-terminal-Gly-aminoethanethioate + L-cysteinyl-[cysteine desulfurase] + A + AMP + 2 H(+). The protein operates within cofactor biosynthesis; thiamine diphosphate biosynthesis. Functionally, catalyzes the ATP-dependent transfer of a sulfur to tRNA to produce 4-thiouridine in position 8 of tRNAs, which functions as a near-UV photosensor. Also catalyzes the transfer of sulfur to the sulfur carrier protein ThiS, forming ThiS-thiocarboxylate. This is a step in the synthesis of thiazole, in the thiamine biosynthesis pathway. The sulfur is donated as persulfide by IscS. This is tRNA sulfurtransferase from Escherichia coli O157:H7.